A 363-amino-acid chain; its full sequence is Flagellar P-ring protein (363 aa).

The N-terminal stretch at 1-20 (MKCKLIFAVFMLAFSMPSQA) is a signal peptide.

Belongs to the FlgI family. As to quaternary structure, the basal body constitutes a major portion of the flagellar organelle and consists of four rings (L,P,S, and M) mounted on a central rod.

It localises to the periplasm. Its subcellular location is the bacterial flagellum basal body. Assembles around the rod to form the L-ring and probably protects the motor/basal body from shearing forces during rotation. In Shewanella oneidensis (strain ATCC 700550 / JCM 31522 / CIP 106686 / LMG 19005 / NCIMB 14063 / MR-1), this protein is Flagellar P-ring protein.